Reading from the N-terminus, the 238-residue chain is Photosynthetic NDH subunit of lumenal location 1, chloroplastic (238 aa).

This sequence belongs to the PsbP family. In terms of assembly, part of the chloroplast NDH complex, composed of a mixture of chloroplast and nucleus encoded subunits. Component of the NDH lumenal subcomplex, at least composed of PnsL1, PnsL2, PnsL3, PnsL4 and PnsL5.

Its subcellular location is the plastid. The protein resides in the chloroplast thylakoid membrane. In terms of biological role, NDH shuttles electrons from NAD(P)H:plastoquinone, via FMN and iron-sulfur (Fe-S) centers, to quinones in the photosynthetic chain and possibly in a chloroplast respiratory chain. The immediate electron acceptor for the enzyme in this species is believed to be plastoquinone. Couples the redox reaction to proton translocation, and thus conserves the redox energy in a proton gradient. Required for accumulation of the chloroplast NAD(P)H dehydrogenase (NDH) complex. This is Photosynthetic NDH subunit of lumenal location 1, chloroplastic from Arabidopsis thaliana (Mouse-ear cress).